Here is a 212-residue protein sequence, read N- to C-terminus: Thymidylate kinase (212 aa).

11–18 (GPEGAGKT) contacts ATP.

This sequence belongs to the thymidylate kinase family.

It catalyses the reaction dTMP + ATP = dTDP + ADP. Its function is as follows. Phosphorylation of dTMP to form dTDP in both de novo and salvage pathways of dTTP synthesis. The protein is Thymidylate kinase of Streptococcus pneumoniae (strain Hungary19A-6).